The sequence spans 326 residues: GMP reductase (326 aa).

Cysteine 175 functions as the Thioimidate intermediate in the catalytic mechanism. NADP(+) is bound at residue isoleucine 204–valine 227.

It belongs to the IMPDH/GMPR family. GuaC type 2 subfamily.

The catalysed reaction is IMP + NH4(+) + NADP(+) = GMP + NADPH + 2 H(+). In terms of biological role, catalyzes the irreversible NADPH-dependent deamination of GMP to IMP. It functions in the conversion of nucleobase, nucleoside and nucleotide derivatives of G to A nucleotides, and in maintaining the intracellular balance of A and G nucleotides. The sequence is that of GMP reductase from Bacillus licheniformis (strain ATCC 14580 / DSM 13 / JCM 2505 / CCUG 7422 / NBRC 12200 / NCIMB 9375 / NCTC 10341 / NRRL NRS-1264 / Gibson 46).